Consider the following 570-residue polypeptide: Carotenoid cleavage dioxygenase 8, chloroplastic (570 aa).

Residues 1–56 (MASLITTKAMMSHHHVLSSTRITTLYSDNSIGDQQIKTKPQVPHRLFARRIFGVTR) constitute a chloroplast transit peptide. The Fe cation site is built by histidine 254, histidine 305, histidine 372, and histidine 563.

This sequence belongs to the carotenoid oxygenase family. Fe(2+) is required as a cofactor. As to expression, expressed in flowers, siliques, inflorescence stems, petiole and leaves, and at a much higher level in roots.

The protein localises to the plastid. Its subcellular location is the chloroplast. The catalysed reaction is 9-cis-10'-apo-beta-carotenal + 2 O2 = (2E,4E,6E)-7-hydroxy-4-methylhepta-2,4,6-trienal + (11R)-carlactone. It catalyses the reaction all-trans-10'-apo-beta-carotenal + O2 = (2E,4E,6E)-4-methylocta-2,4,6-trienedial + 13-apo-beta-carotenone. Its function is as follows. Involved in strigolactones biosynthesis by cleaving the C(27) 9-cis-10'-apo-beta-carotenal produced by CCD7. Produces the C(19) carlactone and a C(8) hydroxyaldehyde. Also shows lower activity with all-trans-10'-apo-beta-carotenal producing a C(9) dialdehyde and the C(18) 13-apo-beta-carotenone. Strigolactones are hormones that inhibit tillering and shoot branching through the MAX-dependent pathway, contribute to the regulation of shoot architectural response to phosphate-limiting conditions and function as rhizosphere signal that stimulates hyphal branching of arbuscular mycorrhizal fungi and trigger seed germination of root parasitic weeds. Also active on other carotenoid substrates like licopene or zeaxanthin. This Arabidopsis thaliana (Mouse-ear cress) protein is Carotenoid cleavage dioxygenase 8, chloroplastic.